Consider the following 239-residue polypeptide: Large ribosomal subunit protein uL1 (239 aa).

It belongs to the universal ribosomal protein uL1 family. As to quaternary structure, part of the 50S ribosomal subunit.

In terms of biological role, binds directly to 23S rRNA. The L1 stalk is quite mobile in the ribosome, and is involved in E site tRNA release. Protein L1 is also a translational repressor protein, it controls the translation of the L11 operon by binding to its mRNA. The polypeptide is Large ribosomal subunit protein uL1 (Rickettsia africae (strain ESF-5)).